The sequence spans 152 residues: 1,4-dihydroxy-2-naphthoyl-CoA hydrolase (152 aa).

The active site involves Asp20.

This sequence belongs to the 4-hydroxybenzoyl-CoA thioesterase family. DHNA-CoA hydrolase subfamily.

The catalysed reaction is 1,4-dihydroxy-2-naphthoyl-CoA + H2O = 1,4-dihydroxy-2-naphthoate + CoA + H(+). Its pathway is cofactor biosynthesis; phylloquinone biosynthesis. It functions in the pathway quinol/quinone metabolism; 1,4-dihydroxy-2-naphthoate biosynthesis; 1,4-dihydroxy-2-naphthoate from chorismate: step 7/7. Functionally, catalyzes the hydrolysis of 1,4-dihydroxy-2-naphthoyl-CoA (DHNA-CoA) to 1,4-dihydroxy-2-naphthoate (DHNA), a reaction involved in phylloquinone (vitamin K1) biosynthesis. The sequence is that of 1,4-dihydroxy-2-naphthoyl-CoA hydrolase from Synechococcus sp. (strain CC9311).